We begin with the raw amino-acid sequence, 95 residues long: Small ribosomal subunit protein bS18 (95 aa).

The protein belongs to the bacterial ribosomal protein bS18 family. Part of the 30S ribosomal subunit. Forms a tight heterodimer with protein bS6.

Functionally, binds as a heterodimer with protein bS6 to the central domain of the 16S rRNA, where it helps stabilize the platform of the 30S subunit. This Rickettsia africae (strain ESF-5) protein is Small ribosomal subunit protein bS18.